Here is a 29-residue protein sequence, read N- to C-terminus: Cytochrome b6-f complex subunit 8 (29 aa).

The helical transmembrane segment at 3–23 (IVSLAWAGLMVVFTFSLSLVV) threads the bilayer.

It belongs to the PetN family. In terms of assembly, the 4 large subunits of the cytochrome b6-f complex are cytochrome b6, subunit IV (17 kDa polypeptide, PetD), cytochrome f and the Rieske protein, while the 4 small subunits are PetG, PetL, PetM and PetN. The complex functions as a dimer.

The protein localises to the plastid. Its subcellular location is the chloroplast thylakoid membrane. Its function is as follows. Component of the cytochrome b6-f complex, which mediates electron transfer between photosystem II (PSII) and photosystem I (PSI), cyclic electron flow around PSI, and state transitions. The protein is Cytochrome b6-f complex subunit 8 of Arabis hirsuta (Hairy rock-cress).